Consider the following 470-residue polypeptide: TNF receptor-associated factor 4 (470 aa).

The RING-type zinc-finger motif lies at 18 to 58 (CPLCGKPMREPVQVSTCGHRFCDTCLQEFLSEGVFKCPEDQ). 3 consecutive TRAF-type zinc fingers follow at residues 102-154 (HLNT…EAYE), 155-208 (SHEG…DTIQ), and 209-266 (SHQY…KLAM). Residue Lys263 forms a Glycyl lysine isopeptide (Lys-Gly) (interchain with G-Cter in ubiquitin) linkage. Positions 277-309 (HLAMMCALVSRQRQELQELRRELEELSVGSDGV) form a coiled coil. Positions 307 to 462 (DGVLIWKIGS…DDAVFIRAAV (156 aa)) constitute an MATH domain. Ser426 carries the phosphoserine modification.

The protein belongs to the TNF receptor-associated factor family. B subfamily. Homotrimer. Interacts with LTBR/TNFRSF3, NGFR/TNFRSF16, RPS6KB1 and TGFB1I1. Interacts with SMURF1. Interacts (via TRAF domain) with MAP3K4 (via kinase domain). Interacts with NCF1, TICAM1, IRAK1 and TRAF6, and is probably part of a complex containing TRAF4, NCF1, TICAM1, IRAK1 and TRAF6. Interacts (via MATH domain) with GP6 and GP1BB. Interacts with EGFR (via C-terminal region); this interaction promotes the formation of EGFR asymmetric dimers. Interacts with PKM; this interaction promotes PKM kinase activity. In terms of processing, polyubiquitinated, leading to its proteasomal degradation. Ubiquitinated at Lys-263 by the SCF(FBXL2) complex, leading to its degradation by the proteasome. As to expression, expressed in epithelial cells of thymus, dendritic cells of lymph node, and in the basal cell layer of epithelia such as epidermis, nasopharynx, respiratory tract, salivary gland, and esophagus.

It is found in the cytoplasm. It localises to the nucleus. Its subcellular location is the perinuclear region. The protein resides in the cell junction. The protein localises to the tight junction. It is found in the cell membrane. It localises to the cytoskeleton. The catalysed reaction is S-ubiquitinyl-[E2 ubiquitin-conjugating enzyme]-L-cysteine + [acceptor protein]-L-lysine = [E2 ubiquitin-conjugating enzyme]-L-cysteine + N(6)-ubiquitinyl-[acceptor protein]-L-lysine.. It functions in the pathway protein degradation; proteasomal ubiquitin-dependent pathway. Adapter protein with E3 ligase activity that is involved in many diverse biological processes including cell proliferation, migration, differentiation, DNA repair, platelet activation or apoptosis. Promotes EGFR-mediated signaling by facilitating the dimerization of EGFR and downstream AKT activation thereby promoting cell proliferation. Ubiquitinates SMURF2 through 'Lys-48'-linked ubiquitin chain leading to SMURF2 degradation through the proteasome and subsequently osteogenic differentiation. Promotes 'Lys-63'-mediated ubiquitination of CHK1 which in turn activates cell cycle arrest and activation of DNA repair. In addition, promotes an atypical 'Lys-29'-linked ubiquitination at the C-terminal end of IRS1 which is crucial for insulin-like growth factor (IGF) signal transduction. Regulates activation of NF-kappa-B in response to signaling through Toll-like receptors. Required for normal skeleton development, and for normal development of the respiratory tract. Required for activation of RPS6KB1 in response to TNF signaling. Modulates TRAF6 functions. Inhibits adipogenic differentiation by activating pyruvate kinase PKM activity and subsequently the beta-catenin signaling pathway. This Homo sapiens (Human) protein is TNF receptor-associated factor 4 (TRAF4).